The following is a 385-amino-acid chain: Eukaryotic translation initiation factor 3 subunit M (385 aa).

Positions 180–342 (NSELASKVMI…RKVHISSTMH (163 aa)) constitute a PCI domain.

This sequence belongs to the eIF-3 subunit M family. Component of the eukaryotic translation initiation factor 3 (eIF-3) complex.

The protein resides in the cytoplasm. In terms of biological role, component of the eukaryotic translation initiation factor 3 (eIF-3) complex, which is involved in protein synthesis of a specialized repertoire of mRNAs and, together with other initiation factors, stimulates binding of mRNA and methionyl-tRNAi to the 40S ribosome. The eIF-3 complex specifically targets and initiates translation of a subset of mRNAs involved in cell proliferation. The protein is Eukaryotic translation initiation factor 3 subunit M of Anopheles gambiae (African malaria mosquito).